A 506-amino-acid polypeptide reads, in one-letter code: 2-isopropylmalate synthase (506 aa).

Residues 4 to 266 (ILFMDTTLRD…EPSMTLKEIK (263 aa)) form the Pyruvate carboxyltransferase domain. The Mn(2+) site is built by D13, H201, H203, and N237. Positions 390 to 506 (NITQLQVHFV…KLKSFIQLVK (117 aa)) are regulatory domain.

This sequence belongs to the alpha-IPM synthase/homocitrate synthase family. LeuA type 1 subfamily. Homodimer. Requires Mn(2+) as cofactor.

Its subcellular location is the cytoplasm. It carries out the reaction 3-methyl-2-oxobutanoate + acetyl-CoA + H2O = (2S)-2-isopropylmalate + CoA + H(+). It functions in the pathway amino-acid biosynthesis; L-leucine biosynthesis; L-leucine from 3-methyl-2-oxobutanoate: step 1/4. Functionally, catalyzes the condensation of the acetyl group of acetyl-CoA with 3-methyl-2-oxobutanoate (2-ketoisovalerate) to form 3-carboxy-3-hydroxy-4-methylpentanoate (2-isopropylmalate). This chain is 2-isopropylmalate synthase, found in Bacillus cereus (strain 03BB102).